A 136-amino-acid polypeptide reads, in one-letter code: NHL-repeat-containing protein 4 (136 aa).

NHL repeat units lie at residues 48–91 (QPLG…FPRV) and 93–132 (PPIC…YQYL).

This Mus musculus (Mouse) protein is NHL-repeat-containing protein 4 (Nhlrc4).